Here is a 431-residue protein sequence, read N- to C-terminus: Histidinol dehydrogenase (431 aa).

The NAD(+) site is built by Y127, Q190, and N213. Residues S238, Q260, and H263 each contribute to the substrate site. Zn(2+) contacts are provided by Q260 and H263. Active-site proton acceptor residues include E329 and H330. Substrate-binding residues include H330, D363, E417, and H422. D363 serves as a coordination point for Zn(2+). H422 contacts Zn(2+).

This sequence belongs to the histidinol dehydrogenase family. Zn(2+) is required as a cofactor.

The enzyme catalyses L-histidinol + 2 NAD(+) + H2O = L-histidine + 2 NADH + 3 H(+). It functions in the pathway amino-acid biosynthesis; L-histidine biosynthesis; L-histidine from 5-phospho-alpha-D-ribose 1-diphosphate: step 9/9. Catalyzes the sequential NAD-dependent oxidations of L-histidinol to L-histidinaldehyde and then to L-histidine. The protein is Histidinol dehydrogenase of Methanopyrus kandleri (strain AV19 / DSM 6324 / JCM 9639 / NBRC 100938).